A 291-amino-acid polypeptide reads, in one-letter code: GTPase Era (291 aa).

The Era-type G domain occupies 2-167 (KSGFVSIIGR…LDEIVKYLDE (166 aa)). A G1 region spans residues 10–17 (GRTNAGKS). 10-17 (GRTNAGKS) is a GTP binding site. The interval 36–40 (NATRR) is G2. Residues 57–60 (DTPG) are G3. GTP contacts are provided by residues 57–61 (DTPGL) and 116–119 (NKVD). The G4 stretch occupies residues 116–119 (NKVD). Residues 146 to 148 (YSS) are G5. The KH type-2 domain occupies 186–274 (YRDFILESIY…LLKLFVTVKK (89 aa)).

It belongs to the TRAFAC class TrmE-Era-EngA-EngB-Septin-like GTPase superfamily. Era GTPase family. As to quaternary structure, monomer.

The protein resides in the cytoplasm. Its subcellular location is the cell inner membrane. In terms of biological role, an essential GTPase that binds both GDP and GTP, with rapid nucleotide exchange. Plays a role in 16S rRNA processing and 30S ribosomal subunit biogenesis and possibly also in cell cycle regulation and energy metabolism. The sequence is that of GTPase Era from Campylobacter jejuni subsp. jejuni serotype O:23/36 (strain 81-176).